A 465-amino-acid chain; its full sequence is Poly(A) polymerase I (465 aa).

Residues D80, D82, and D162 contribute to the active site. Residues 430 to 465 (APPEQKGMLNELDDDPAPRRRRSRPRKRAPRREGTV) are disordered. Basic residues predominate over residues 448–459 (RRRRSRPRKRAP).

It belongs to the tRNA nucleotidyltransferase/poly(A) polymerase family.

The enzyme catalyses RNA(n) + ATP = RNA(n)-3'-adenine ribonucleotide + diphosphate. Functionally, adds poly(A) tail to the 3' end of many RNAs, which usually targets these RNAs for decay. Plays a significant role in the global control of gene expression, through influencing the rate of transcript degradation, and in the general RNA quality control. The protein is Poly(A) polymerase I of Salmonella typhimurium (strain LT2 / SGSC1412 / ATCC 700720).